Reading from the N-terminus, the 164-residue chain is Translation initiation factor IF-3 (164 aa).

This sequence belongs to the IF-3 family. As to quaternary structure, monomer.

Its subcellular location is the cytoplasm. Its function is as follows. IF-3 binds to the 30S ribosomal subunit and shifts the equilibrium between 70S ribosomes and their 50S and 30S subunits in favor of the free subunits, thus enhancing the availability of 30S subunits on which protein synthesis initiation begins. The chain is Translation initiation factor IF-3 from Bordetella bronchiseptica (strain ATCC BAA-588 / NCTC 13252 / RB50) (Alcaligenes bronchisepticus).